Consider the following 323-residue polypeptide: tRNA U34 carboxymethyltransferase (323 aa).

Residues lysine 91, tryptophan 105, lysine 110, glycine 130, 181-182, methionine 196, tyrosine 200, and arginine 315 each bind carboxy-S-adenosyl-L-methionine; that span reads IE.

The protein belongs to the class I-like SAM-binding methyltransferase superfamily. CmoB family. Homotetramer.

It carries out the reaction carboxy-S-adenosyl-L-methionine + 5-hydroxyuridine(34) in tRNA = 5-carboxymethoxyuridine(34) in tRNA + S-adenosyl-L-homocysteine + H(+). In terms of biological role, catalyzes carboxymethyl transfer from carboxy-S-adenosyl-L-methionine (Cx-SAM) to 5-hydroxyuridine (ho5U) to form 5-carboxymethoxyuridine (cmo5U) at position 34 in tRNAs. The polypeptide is tRNA U34 carboxymethyltransferase (Yersinia pseudotuberculosis serotype O:1b (strain IP 31758)).